The following is a 187-amino-acid chain: Putative manganese efflux pump MntP (187 aa).

Transmembrane regions (helical) follow at residues 3–23 (WLTI…VALA), 39–59 (LGFH…LLGM), 65–85 (ISAY…GRMV), 103–123 (GMTM…VGLS), 124–144 (IAML…VAGV), and 166–186 (ICGG…HTLL).

This sequence belongs to the MntP (TC 9.B.29) family.

Its subcellular location is the cell inner membrane. Functionally, probably functions as a manganese efflux pump. The protein is Putative manganese efflux pump MntP of Geobacter sp. (strain M21).